The primary structure comprises 208 residues: MAVTVVNHPLVKHKLGILRQHDVPVSEFRAISNEICRLLTYEATKDLETEKVTIQGWAGPVEVDQIRGKKITVVPILRAGLGMLDGLLDMIPGAKVSVVGMFRNEETLEPVKYYVKLAKNIEERMAIIIDPMLATGGTLNATIDLLKEAGCPQIKGLFLVAAPEGIKKVVDRHPDVDIYVAAVDERLNEHGYILPGLGDAGDKIFGTK.

5-phospho-alpha-D-ribose 1-diphosphate-binding positions include Arg78, Arg103, and 130-138 (DPMLATGGT). Uracil contacts are provided by residues Ile193 and 198-200 (GDA). Residue Asp199 participates in 5-phospho-alpha-D-ribose 1-diphosphate binding.

Belongs to the UPRTase family. Requires Mg(2+) as cofactor.

The catalysed reaction is UMP + diphosphate = 5-phospho-alpha-D-ribose 1-diphosphate + uracil. Its pathway is pyrimidine metabolism; UMP biosynthesis via salvage pathway; UMP from uracil: step 1/1. Its activity is regulated as follows. Allosterically activated by GTP. In terms of biological role, catalyzes the conversion of uracil and 5-phospho-alpha-D-ribose 1-diphosphate (PRPP) to UMP and diphosphate. In Nitratidesulfovibrio vulgaris (strain DSM 19637 / Miyazaki F) (Desulfovibrio vulgaris), this protein is Uracil phosphoribosyltransferase.